The following is a 121-amino-acid chain: Large ribosomal subunit protein bL19 (121 aa).

It belongs to the bacterial ribosomal protein bL19 family.

Functionally, this protein is located at the 30S-50S ribosomal subunit interface and may play a role in the structure and function of the aminoacyl-tRNA binding site. In Borrelia garinii subsp. bavariensis (strain ATCC BAA-2496 / DSM 23469 / PBi) (Borreliella bavariensis), this protein is Large ribosomal subunit protein bL19.